The primary structure comprises 146 residues: uncharacterized protein (146 aa).

In terms of domain architecture, N-acetyltransferase spans 7 to 146 (LQINYKTDEL…EGHDILIWNP (140 aa)).

This is an uncharacterized protein from Staphylococcus epidermidis (strain ATCC 35984 / DSM 28319 / BCRC 17069 / CCUG 31568 / BM 3577 / RP62A).